We begin with the raw amino-acid sequence, 640 residues long: MPIITLPNGDQKSFDHPVSVMEVAQSIGPGLAKNTVAGRVNDRLVDACDLITEDSTLQIITPKDEEGLEIIRHSCAHLVGHAVKQLFPEAKMVIGPVIEEGFYYDIWMPCPFTLDDMAAIEERMKKLIDQDYDVIKKMTPRDEVIKVFTDRGEEYKLRLVEDMPEEKAMGLYYHQEYVDMCRGPHVPNTKFLKSFKLTKISGAYWRGDAKNEQLQRIYGTAWADKKQLAAYIKRIEEAENRDHRKIGKALDLFHMQEEAPGMVFWHANGWTIYQVLEQYMRKVQQDNGYQEIKTPQIVDFTLWEKSGHAANYAENMFTTHSESRNYAVKPMNCPCHVQVFNQGLKSYRDLPIRLAEFGSCHRNEPSGSLHGIMRVRGFTQDDAHIFCTKEQIGKEVADFIKLTLDVYKDFGFEEVQMKLSTRPEKRVGDDALWDLAEKSLADALDAAGLEWELQPGEGAFYGPKIEFSLKDCLGRVWQCGTIQCDFNLPVRLDASYVTEENERDQPVMLHRAILGSFERFIGILIEHYAGFMPPWLSPVQACVMNITDSQAEASEQVVAKLKENGLRAISDLRNEKIGFKIRERTLERIPYLLVLGDREVEEGTVNVRTRSGKNLGTMSVDAFIDLVKSAVAERGRYIVE.

The region spanning Met-1 to Thr-61 is the TGS domain. Residues Asp-242–Pro-533 form a catalytic region. Zn(2+) is bound by residues Cys-333, His-384, and His-510.

The protein belongs to the class-II aminoacyl-tRNA synthetase family. In terms of assembly, homodimer. The cofactor is Zn(2+).

It localises to the cytoplasm. The catalysed reaction is tRNA(Thr) + L-threonine + ATP = L-threonyl-tRNA(Thr) + AMP + diphosphate + H(+). Its function is as follows. Catalyzes the attachment of threonine to tRNA(Thr) in a two-step reaction: L-threonine is first activated by ATP to form Thr-AMP and then transferred to the acceptor end of tRNA(Thr). Also edits incorrectly charged L-seryl-tRNA(Thr). In Acinetobacter baumannii (strain SDF), this protein is Threonine--tRNA ligase.